A 220-amino-acid polypeptide reads, in one-letter code: NADH-quinone oxidoreductase subunit I (220 aa).

2 4Fe-4S ferredoxin-type domains span residues 71 to 102 and 112 to 141; these read LQRL…IITH and DSYT…MGNR. Cys82, Cys85, Cys88, Cys92, Cys121, Cys124, Cys127, and Cys131 together coordinate [4Fe-4S] cluster. The interval 187-220 is disordered; it reads MQATPLDYVQEPSKEESKEESPTSPESHKGDENV. Residues 198 to 220 are compositionally biased toward basic and acidic residues; sequence PSKEESKEESPTSPESHKGDENV.

This sequence belongs to the complex I 23 kDa subunit family. As to quaternary structure, NDH-1 is composed of 14 different subunits. Subunits NuoA, H, J, K, L, M, N constitute the membrane sector of the complex. Requires [4Fe-4S] cluster as cofactor.

Its subcellular location is the cell inner membrane. The enzyme catalyses a quinone + NADH + 5 H(+)(in) = a quinol + NAD(+) + 4 H(+)(out). In terms of biological role, NDH-1 shuttles electrons from NADH, via FMN and iron-sulfur (Fe-S) centers, to quinones in the respiratory chain. The immediate electron acceptor for the enzyme in this species is believed to be ubiquinone. Couples the redox reaction to proton translocation (for every two electrons transferred, four hydrogen ions are translocated across the cytoplasmic membrane), and thus conserves the redox energy in a proton gradient. This Helicobacter pylori (strain J99 / ATCC 700824) (Campylobacter pylori J99) protein is NADH-quinone oxidoreductase subunit I.